The primary structure comprises 199 residues: CASP-like protein 4B1 (199 aa).

The segment at 1 to 32 is disordered; that stretch reads MAMVASPDDIVKSPLPPPPPPPPPPLPPAHKD. At 1–53 the chain is on the cytoplasmic side; that stretch reads MAMVASPDDIVKSPLPPPPPPPPPPLPPAHKDKAAYNPYSGCPAHGGDDGLDG. Pro residues predominate over residues 14 to 28; the sequence is PLPPPPPPPPPPLPP. The helical transmembrane segment at 54-74 threads the bilayer; that stretch reads IVLVLRAAAALLALVAMALVA. Topologically, residues 75-91 are extracellular; it reads SCRHGDWMEFTRYQEYR. The helical transmembrane segment at 92–112 threads the bilayer; the sequence is YLLGVAVVASLYSALQAARTF. Residues 113–127 lie on the Cytoplasmic side of the membrane; it reads RRMRAGTAYAATFLD. A helical membrane pass occupies residues 128 to 148; it reads FAGDQAVGYLLITASSAALPI. At 149 to 163 the chain is on the extracellular side; it reads TIRMRSAVVNTFTDV. Residues 164–184 traverse the membrane as a helical segment; the sequence is VAASISFAFLAFAALAFSALI. Residues 185–199 lie on the Cytoplasmic side of the membrane; sequence AGFRLSSSSSSAYNY.

This sequence belongs to the Casparian strip membrane proteins (CASP) family. In terms of assembly, homodimer and heterodimers.

It is found in the cell membrane. The sequence is that of CASP-like protein 4B1 from Oryza sativa subsp. japonica (Rice).